The following is a 188-amino-acid chain: Protein SSX4 (188 aa).

Residues 20–83 enclose the KRAB-related domain; it reads KLRKAFDDIA…KRAADFHGND (64 aa). Residues 116–127 show a composition bias toward basic and acidic residues; that stretch reads PAEEENGLKEVP. Residues 116-167 form a disordered region; sequence PAEEENGLKEVPEASGPQNDGKQLCPPGNPSTLEKINKTSGPKRGKHAWTHR. Polar residues predominate over residues 145 to 155; that stretch reads PSTLEKINKTS. The segment covering 156–167 has biased composition (basic residues); it reads GPKRGKHAWTHR.

The protein belongs to the SSX family.

Functionally, could act as a modulator of transcription. The polypeptide is Protein SSX4 (SSX4) (Homo sapiens (Human)).